Here is an 86-residue protein sequence, read N- to C-terminus: Large ribosomal subunit protein bL27 (86 aa).

Residues 1–23 (MAHKKGTGSTRNGRDSNSKRLGV) form a disordered region.

Belongs to the bacterial ribosomal protein bL27 family.

The protein is Large ribosomal subunit protein bL27 of Prochlorococcus marinus (strain MIT 9515).